A 93-amino-acid polypeptide reads, in one-letter code: Mitochondrial import inner membrane translocase subunit TIM10 (93 aa).

The interval M1 to D31 is interaction with transmembrane regions of transmembrane proteins in transit. The Twin CX3C motif signature appears at C40–C65. Intrachain disulfides connect C40–C65 and C44–C61. The tract at residues N73–F93 is required for heterohexamerization.

The protein belongs to the small Tim family. As to quaternary structure, heterohexamer; composed of 3 copies of TIM9 and 3 copies of TIM10, named soluble 70 kDa complex. Associates directly with the TIM12 component of the TIM22 complex, whose core is composed of TIM18, TIM22 and TIM54. Interacts with the transmembrane regions of multi-pass transmembrane proteins in transit.

The protein resides in the mitochondrion inner membrane. Its subcellular location is the mitochondrion intermembrane space. Functionally, mitochondrial intermembrane chaperone that participates in the import and insertion of multi-pass transmembrane proteins into the mitochondrial inner membrane. Also required for the transfer of beta-barrel precursors from the TOM complex to the sorting and assembly machinery (SAM complex) of the outer membrane. Acts as a chaperone-like protein that protects the hydrophobic precursors from aggregation and guide them through the mitochondrial intermembrane space. Compared to TIM9, it may function as a substrate sensor. This Saccharomyces cerevisiae (strain ATCC 204508 / S288c) (Baker's yeast) protein is Mitochondrial import inner membrane translocase subunit TIM10 (TIM10).